A 315-amino-acid chain; its full sequence is MRKRARIIYNPTSGKELFKRELPDALIKLEKAGYETSAYATEKIGDATLEAERAMHENYDVLIAAGGDGTLNEVVNGIAEKPNRPKLGVIPMGTVNDFGRALHIPNDIMGALDVIIEGHSTKVDIGKMNNRYFINLAAGGQLTQVSYETPSKLKSIVGPFAYYIKGFEMLPQMKAVDLRIEYDGNVFQGEALLFFLGLTNSMAGFEKLVPDAKLDDGYFTLIIVEKSNLAELGHIMTLASRGEHTKHPKVIYEKAKAINISSFTDLQLNVDGEYGGKLPANFLNLERHIDVFAPNDIVNEELINNDHVDDNLIEE.

The region spanning 1-132 (MRKRARIIYN…VDIGKMNNRY (132 aa)) is the DAGKc domain. ATP contacts are provided by residues 10 to 14 (NPTSG), Thr-41, 67 to 73 (GDGTLNE), and Thr-94. 3 residues coordinate Mg(2+): Lys-213, Asp-216, and Tyr-218. Glu-273 serves as the catalytic Proton acceptor.

It belongs to the diacylglycerol/lipid kinase family. Homodimer. Requires Mg(2+) as cofactor.

The enzyme catalyses a 1,2-diacyl-sn-glycerol + ATP = a 1,2-diacyl-sn-glycero-3-phosphate + ADP + H(+). Functionally, catalyzes the phosphorylation of diacylglycerol (DAG) into phosphatidic acid. Is a key enzyme involved in the production of lipoteichoic acid by reintroducing DAG formed from the breakdown of membrane phospholipids into the phosphatidylglycerol biosynthetic pathway. This chain is Diacylglycerol kinase (dagK), found in Staphylococcus aureus (strain USA300 / TCH1516).